Reading from the N-terminus, the 299-residue chain is uncharacterized protein (299 aa).

Residues 1–59 (MDKIHAMQLFIKVAELESFSRAADFFALPKGSVSRQIQALEHQLGTQLLQRTTRRVKLT) form the HTH lysR-type domain. A DNA-binding region (H-T-H motif) is located at residues 19 to 38 (FSRAADFFALPKGSVSRQIQ).

The protein belongs to the LysR transcriptional regulatory family.

This is an uncharacterized protein from Escherichia coli (strain K12).